The chain runs to 367 residues: Pyrimidine monooxygenase RutA (367 aa).

FMN is bound by residues 50-51, N116, E125, 141-142, and S191; these read IK and RY.

It belongs to the NtaA/SnaA/DszA monooxygenase family. RutA subfamily.

The catalysed reaction is uracil + FMNH2 + NADH + O2 = (Z)-3-ureidoacrylate + FMN + NAD(+) + H2O + H(+). It carries out the reaction thymine + FMNH2 + NADH + O2 = (Z)-2-methylureidoacrylate + FMN + NAD(+) + H2O + H(+). Catalyzes the pyrimidine ring opening between N-3 and C-4 by an unusual flavin hydroperoxide-catalyzed mechanism, adding oxygen atoms in the process to yield ureidoacrylate peracid, that immediately reacts with FMN forming ureidoacrylate and FMN-N(5)-oxide. The FMN-N(5)-oxide reacts spontaneously with NADH to produce FMN. Requires the flavin reductase RutF to regenerate FMN in vivo. This chain is Pyrimidine monooxygenase RutA, found in Allorhizobium ampelinum (strain ATCC BAA-846 / DSM 112012 / S4) (Agrobacterium vitis (strain S4)).